The primary structure comprises 320 residues: Aspartate carbamoyltransferase catalytic subunit (320 aa).

R65 and T66 together coordinate carbamoyl phosphate. K93 contacts L-aspartate. Carbamoyl phosphate contacts are provided by R115, H143, and Q146. Residues R176 and R230 each contribute to the L-aspartate site. 2 residues coordinate carbamoyl phosphate: G271 and P272.

This sequence belongs to the aspartate/ornithine carbamoyltransferase superfamily. ATCase family. As to quaternary structure, heterododecamer (2C3:3R2) of six catalytic PyrB chains organized as two trimers (C3), and six regulatory PyrI chains organized as three dimers (R2).

The enzyme catalyses carbamoyl phosphate + L-aspartate = N-carbamoyl-L-aspartate + phosphate + H(+). The protein operates within pyrimidine metabolism; UMP biosynthesis via de novo pathway; (S)-dihydroorotate from bicarbonate: step 2/3. Functionally, catalyzes the condensation of carbamoyl phosphate and aspartate to form carbamoyl aspartate and inorganic phosphate, the committed step in the de novo pyrimidine nucleotide biosynthesis pathway. The protein is Aspartate carbamoyltransferase catalytic subunit of Maricaulis maris (strain MCS10) (Caulobacter maris).